The primary structure comprises 162 residues: Mitochondrial intermembrane space import and assembly protein 40 homolog (162 aa).

Positions 1–61 are disordered; that stretch reads MGQAQSDENS…DNENESLEAK (61 aa). Over residues 9–18 the composition is skewed to low complexity; sequence NSIPTTTTTN. 3 disulfide bridges follow: Cys-68–Cys-70, Cys-79–Cys-112, and Cys-89–Cys-102. Residues 76–120 enclose the CHCH domain; that stretch reads NGSCGSQFSEAFLCFLKSTAEEKGSDCVNPFVALQSCINANPDAF. 2 consecutive short sequence motifs (cx9C motif) follow at residues 79–89 and 102–112; these read CGSQFSEAFLC and CVNPFVALQSC. Residues 119–162 are disordered; it reads AFSKSVTGDEKETEKKEEQPPVQDHRIIPPLWAKDPPRSGNSKL. A compositionally biased stretch (basic and acidic residues) spans 125 to 145; that stretch reads TGDEKETEKKEEQPPVQDHRI.

The protein localises to the mitochondrion intermembrane space. It localises to the peroxisome matrix. In terms of biological role, required for the import and folding of small cysteine-containing proteins in the mitochondrial intermembrane space. Involved in the mitochondrial oxidative folding of the copper-zinc superoxide dismutase CSD1, the copper chaperone for superoxide dismutase CCS, and subunits of the mitochondrial membrane respiratory chain NADH dehydrogenase (Complex I). Involved in the peroxisomal oxidative folding of the copper-zinc superoxide dismutase CSD3, and the fatty acid beta-oxidation multifunctional protein AIM1. In Arabidopsis thaliana (Mouse-ear cress), this protein is Mitochondrial intermembrane space import and assembly protein 40 homolog.